The primary structure comprises 490 residues: Betaine aldehyde dehydrogenase (490 aa).

NAD(+) is bound by residues Lys174, Glu177, and Gly227–Gly232. Residues Glu249 and Cys283 contribute to the active site. Glu384 provides a ligand contact to NAD(+).

It belongs to the aldehyde dehydrogenase family. In terms of assembly, homodimer.

The enzyme catalyses betaine aldehyde + NAD(+) + H2O = glycine betaine + NADH + 2 H(+). The protein operates within amine and polyamine biosynthesis; betaine biosynthesis via choline pathway; betaine from betaine aldehyde: step 1/1. Its activity is regulated as follows. Activity is stimulated by low concentrations of salts and by moderate concentrations of glycine betaine. Highly tolerant to high ionic conditions. In vitro, activity is highly stimulated in the presence of proline. Involved in the biosynthesis of the osmoprotectant glycine betaine from choline. Catalyzes the oxidation of betaine aldehyde to betaine. Shows specificity for betaine aldehyde as substrate. Can use both NAD(+) and NADP(+), but NAD(+) is strongly preferred. In Bacillus subtilis (strain 168), this protein is Betaine aldehyde dehydrogenase.